A 767-amino-acid polypeptide reads, in one-letter code: Transducin-like enhancer protein 2 (767 aa).

A q domain region spans residues 1–152 (MYPQGRHPTP…SLLGQQNQLQ (152 aa)). Positions 153-215 (PLSHAPPVPL…SRVDRAASRS (63 aa)) are GP domain. Positions 198–212 (RVGVDAEGSRVDRAA) are enriched in basic and acidic residues. Disordered regions lie at residues 198 to 257 (RVGV…EEDK), 264 to 283 (VDED…CGKA), and 296 to 346 (SPAS…SSAS). The interval 216–279 (SSPSPPESLV…SEPPSPVTTP (64 aa)) is ccN domain. A Nuclear localization signal motif is present at residues 238–242 (KQQRA). The residue at position 253 (Ser-253) is a Phosphoserine; by CK2. Ser-274 is subject to Phosphoserine; by CDK1. Thr-278 is subject to Phosphothreonine; by CDK1. Residues 280-447 (CGKAPLCIPA…VAKPAYSFHV (168 aa)) are SP domain. Low complexity predominate over residues 296–309 (SPASLASSLGSPLP). Phosphoserine is present on Ser-306. Polar residues predominate over residues 323–346 (TPASRSCGTSPPQDSSTPGPSSAS). 6 WD repeats span residues 479 to 517 (AHGE…SKTP), 525 to 564 (NRDN…PRIK), 569 to 608 (SSAP…MVRQ), 611 to 650 (GHTD…QLQQ), 693 to 732 (LHES…SIFQ), and 734 to 766 (KESS…YEVV).

This sequence belongs to the WD repeat Groucho/TLE family. Homooligomer and heterooligomer with other family members. Binds LEF1, TCF7, TCF7L1, TCF7L2, UTY, HES1 and HES5. In terms of processing, ubiquitinated by XIAP/BIRC4. Expressed in bone marrow-derived macrophages.

It localises to the nucleus. Functionally, transcriptional corepressor that binds to a number of transcription factors. Inhibits the transcriptional activation mediated by CTNNB1 and TCF family members in Wnt signaling. The effects of full-length TLE family members may be modulated by association with dominant-negative AES. The protein is Transducin-like enhancer protein 2 (Tle2) of Mus musculus (Mouse).